Consider the following 586-residue polypeptide: ATPase family AAA domain-containing protein 3 (586 aa).

The interval 1–52 is disordered; it reads MSWLFGIKGSKGEGTGPPLPLPPVQPGGEGSGDGGAGDRPGPKDKWSNFDPT. Position 2 is an N-acetylserine (S2). Residues 2 to 49 are required for interaction with the inner surface of the mitochondrial outer membrane; the sequence is SWLFGIKGSKGEGTGPPLPLPPVQPGGEGSGDGGAGDRPGPKDKWSNF. Topologically, residues 2 to 245 are mitochondrial intermembrane; it reads SWLFGIKGSK…FRAFVTDWDK (244 aa). Over residues 27–38 the composition is skewed to gly residues; the sequence is GGEGSGDGGAGD. The stretch at 55-218 forms a coiled coil; sequence ERAAKAAREL…QIRLKAAEHR (164 aa). A helical transmembrane segment spans residues 246 to 262; that stretch reads VTATVAGLTLLAVGIYS. Over 263 to 586 the chain is Mitochondrial matrix; it reads AKNATSVAGR…QPPTLRTQAE (324 aa). An S100B-binding region spans residues 289–304; sequence RITVLEALRHPIQVSR. 351-358 contributes to the ATP binding site; that stretch reads GPPGTGKT. The residue at position 490 (K490) is an N6-acetyllysine; alternate. K490 carries the N6-succinyllysine; alternate modification. An N6-acetyllysine mark is found at K494 and K512.

This sequence belongs to the AAA ATPase family. As to quaternary structure, can form homooligomers. Homodimer formation at the N-terminus may be regulated by ATP and is required for the interaction with the inner surface of the mitochondrial outer membrane and correct mitochondrial homeostasis. Interacts with components of the mitochondrial ribosome and with other proteins involved in mitochondrial RNA metabolism. May also interact with protein involved in lipid metabolism, including STARD9. May interact with FAM210A. Interacts with GADD45GIP1. Interacts with S100B in a Ca(+2)- and Zn(+2)-dependent manner; this interaction probably occurs in the cytosol prior to mitochondrial targeting. S100B could assist ATAD3A cytoplasmic processing, preventing aggregation and favoring mitochondrial localization. Interacts with HSP60/HSPD1. Forms heterooligomers with ATAD3B; this interaction may affect ATAD3A activity. Interacts with CLPB.

Its subcellular location is the mitochondrion inner membrane. The protein localises to the mitochondrion matrix. It localises to the mitochondrion nucleoid. Functionally, essential for mitochondrial network organization, mitochondrial metabolism and cell growth at organism and cellular level. May play an important role in mitochondrial protein synthesis. May also participate in mitochondrial DNA replication. May bind to mitochondrial DNA D-loops and contribute to nucleoid stability. Required for enhanced channeling of cholesterol for hormone-dependent steroidogenesis. Involved in mitochondrial-mediated antiviral innate immunity. Also involved in the mitochondrial DNA damage response by promoting signaling between damaged genomes and the mitochondrial membrane, leading to activation of the integrated stress response (ISR). The sequence is that of ATPase family AAA domain-containing protein 3 (ATAD3) from Bos taurus (Bovine).